Here is a 559-residue protein sequence, read N- to C-terminus: Inositol-3-phosphate synthase 1 (559 aa).

NAD(+) is bound by residues Gly67, Gly68, Asn69, Asn70, Asp141, Ser177, Val178, Gln188, Arg191, Thr228, Ala229, Asn230, Thr231, Gly278, Ser279, Asp303, Ser306, Asn337, Asn338, Asp339, and Lys352. Ser279 bears the Phosphoserine mark. Residue Ser357 is modified to Phosphoserine. NAD(+) is bound by residues Gly390, Asp391, Asp419, and Ser420.

The protein belongs to the myo-inositol 1-phosphate synthase family. The cofactor is NAD(+).

It localises to the cytoplasm. The catalysed reaction is D-glucose 6-phosphate = 1D-myo-inositol 3-phosphate. Its pathway is polyol metabolism; myo-inositol biosynthesis; myo-inositol from D-glucose 6-phosphate: step 1/2. Functionally, key enzyme in myo-inositol biosynthesis pathway that catalyzes the conversion of glucose 6-phosphate to 1-myo-inositol 1-phosphate in a NAD-dependent manner. Rate-limiting enzyme in the synthesis of all inositol-containing compounds. The chain is Inositol-3-phosphate synthase 1 (ISYNA1) from Macaca fascicularis (Crab-eating macaque).